Reading from the N-terminus, the 779-residue chain is MVKRGCCHRKMVNHKGCLVSGIFLAVIGAVLFILAFALLPHLINQTTQNAVIQAVIVDSTSSQRYNDWAGQQSIENYYQQYFYAWNLTNPNEFLNGSIPIFETVGPFNYKYEFNFSNVTFQDGGNLATYTQSKSFIYQSDMSPNDPNEIMITNINPAYLGLMFQLAPNAELLDNMPAENLLIALSGCGQMRLFLEYLSSDNFTNIVYFTQNPKLYQEQYLNILKSLNGDEQYFYQQWANATSIPQKGNGWYGMLVSSVNNNNESSNISILSAKLLFNSSNENSILNQEIGSTLWINALLGDKTSITVLTSELQLTVDQIDMILNWWLNDFSKVYTESYVNEICDIPDISMLGVCQFVTGNALNGRSISNYTFLTQPFDQGPIEIPLLYQSIGIDVKLSVSVQQAYKSLFNESDSNSILNLNGLVNFLTASKSFDTFKQYNVTLFDAIKIIGYATAELYEQYNKPTILGLYEKYGGLIVTRSMDDWLWNCQDGILDYLGVDQPCALQQNNTVNKPSTIFTGQQDLSMTNQIFEFQEQTFLTCWNGSVQVEGFTESGQFPPLQSDPPQTMTLFEENVIRPVQLELSGDSQVQGIDTKRYYLVNNSFPISTTFKTTIPGFANLTDIQNLPIYVSLWDMYEVPPQYSSNNLQGLNQTYQSAQVPLDLEPITGNALYYNLKLQINLAIPEFSNWFSSNSTFKNMKSNVFYPILKIGQTATPSQSNIDLLNSQFKLIKILGFVPVIVVSIIGGIILIAGISMFAFGFKKLRQQKQQGYQAIINNE.

The Cytoplasmic segment spans residues methionine 1–cysteine 17. Residues leucine 18–leucine 38 form a helical membrane-spanning segment. Over leucine 39–lysine 732 the chain is Lumenal. Asparagine 44, asparagine 86, asparagine 95, asparagine 114, asparagine 117, asparagine 201, asparagine 239, asparagine 262, asparagine 266, asparagine 277, asparagine 369, asparagine 410, asparagine 440, asparagine 508, asparagine 543, asparagine 601, asparagine 619, asparagine 651, and asparagine 693 each carry an N-linked (GlcNAc...) asparagine glycan. The chain crosses the membrane as a helical span at residues isoleucine 733–glycine 753. Residues isoleucine 754–glutamate 779 are Cytoplasmic-facing. The Tyrosine-type lysosomal sorting signal signature appears at glycine 771 to alanine 774.

Belongs to the CD36 family. Post-translationally, heavily glycosylated.

The protein localises to the lysosome membrane. Functionally, may act as a lysosomal receptor. May be involved in macropinocytosis and fluid phase exocytosis. Binds to the anionic phospholipid phosphoinositol 4,5-bisphosphate, but not to phosphatidylcholine and only weakly to phosphatidylserine. The chain is Lysosome membrane protein 2-A (lmpA) from Dictyostelium discoideum (Social amoeba).